A 171-amino-acid chain; its full sequence is Peptidyl-prolyl cis-trans isomerase 7 (171 aa).

One can recognise a PPIase cyclophilin-type domain in the interval 7 to 170; sequence FFDITIAGKP…SECLIADCGQ (164 aa).

The protein belongs to the cyclophilin-type PPIase family.

The catalysed reaction is [protein]-peptidylproline (omega=180) = [protein]-peptidylproline (omega=0). PPIases accelerate the folding of proteins. It catalyzes the cis-trans isomerization of proline imidic peptide bonds in oligopeptides. The chain is Peptidyl-prolyl cis-trans isomerase 7 (cyn-7) from Caenorhabditis elegans.